Reading from the N-terminus, the 146-residue chain is Snaclec coagulation factor IX/factor X-binding protein subunit B (146 aa).

Residues Met1–Ala23 form the signal peptide. A C-type lectin domain is found at Asp24–Ala146. Disulfide bonds link Cys25-Cys36, Cys53-Cys142, and Cys119-Cys134. Residues Ser64, Gln66, and Glu70 each contribute to the Ca(2+) site. Residue Glu143 participates in Ca(2+) binding.

It belongs to the snaclec family. In terms of assembly, heterodimer with subunit A of IX/X-bp or IX-bp; disulfide-linked. Expressed by the venom gland.

The protein resides in the secreted. Functionally, when linked to subunit A of IX/X-bp, anticoagulant protein which binds to the gamma-carboxyglutamic acid-domain regions of factors IX (F9) and factor X (10) in the presence of calcium with a 1 to 1 stoichiometry. In terms of biological role, when linked to subunit A of IX-bp, anticoagulant protein which binds to the gamma-carboxyglutamic acid-domain regions of factor IX (but not to factor X) in the presence of calcium with a 1 to 1 stoichiometry. This chain is Snaclec coagulation factor IX/factor X-binding protein subunit B, found in Protobothrops flavoviridis (Habu).